A 165-amino-acid polypeptide reads, in one-letter code: Transmembrane protein 128 (165 aa).

4 helical membrane-spanning segments follow: residues 49–69, 81–101, 119–139, and 144–164; these read NIHS…VDFF, WFLC…YCIV, LIPI…IALW, and FFTP…ITLL.

It localises to the membrane. In Homo sapiens (Human), this protein is Transmembrane protein 128 (TMEM128).